The chain runs to 815 residues: Leucine--tRNA ligase (815 aa).

Residues 41 to 51 (PYPSGTLHVGH) carry the 'HIGH' region motif. The 'KMSKS' region motif lies at 576 to 580 (KMSKS). Residue K579 coordinates ATP.

Belongs to the class-I aminoacyl-tRNA synthetase family.

It is found in the cytoplasm. It catalyses the reaction tRNA(Leu) + L-leucine + ATP = L-leucyl-tRNA(Leu) + AMP + diphosphate. This is Leucine--tRNA ligase from Pseudothermotoga lettingae (strain ATCC BAA-301 / DSM 14385 / NBRC 107922 / TMO) (Thermotoga lettingae).